The chain runs to 139 residues: ATP synthase epsilon chain (139 aa).

This sequence belongs to the ATPase epsilon chain family. As to quaternary structure, F-type ATPases have 2 components, CF(1) - the catalytic core - and CF(0) - the membrane proton channel. CF(1) has five subunits: alpha(3), beta(3), gamma(1), delta(1), epsilon(1). CF(0) has three main subunits: a, b and c.

The protein localises to the cell membrane. Its function is as follows. Produces ATP from ADP in the presence of a proton gradient across the membrane. The polypeptide is ATP synthase epsilon chain (Pediococcus pentosaceus (strain ATCC 25745 / CCUG 21536 / LMG 10740 / 183-1w)).